Consider the following 216-residue polypeptide: Somatotropin (216 aa).

An N-terminal signal peptide occupies residues Met1–Ala26. Residue His45 participates in Zn(2+) binding. A disulfide bridge links Cys78 with Cys189. Ser131 is subject to Phosphoserine. Zn(2+) is bound at residue Glu198. A disulfide bridge links Cys206 with Cys214.

It belongs to the somatotropin/prolactin family.

The protein localises to the secreted. Its function is as follows. Plays an important role in growth control. Its major role in stimulating body growth is to stimulate the liver and other tissues to secrete IGF1. It stimulates both the differentiation and proliferation of myoblasts. It also stimulates amino acid uptake and protein synthesis in muscle and other tissues. This Delphinus delphis (Short-beaked common dolphin) protein is Somatotropin (GH1).